A 290-amino-acid chain; its full sequence is Type II secretion system protein C (290 aa).

The Cytoplasmic segment spans residues 1-28 (MTLPFRNDLLSSLLARCKTVPLSRFSQP). A helical membrane pass occupies residues 29–46 (LFWLLLLLLAHQCAGLTW). The Periplasmic segment spans residues 47 to 290 (RLLDLGSQQA…LYDVYVGLSE (244 aa)).

This sequence belongs to the GSP C family.

The protein localises to the cell inner membrane. Involved in a type II secretion system (T2SS, formerly general secretion pathway, GSP) for the export of proteins. The polypeptide is Type II secretion system protein C (exeC) (Aeromonas hydrophila).